Here is an 84-residue protein sequence, read N- to C-terminus: Translational regulator CsrA (84 aa).

The protein belongs to the CsrA/RsmA family. Homodimer; the beta-strands of each monomer intercalate to form a hydrophobic core, while the alpha-helices form wings that extend away from the core.

The protein localises to the cytoplasm. In terms of biological role, a translational regulator that binds mRNA to regulate translation initiation and/or mRNA stability. Usually binds in the 5'-UTR at or near the Shine-Dalgarno sequence preventing ribosome-binding, thus repressing translation. Its main target seems to be the major flagellin gene, while its function is anatagonized by FliW. The sequence is that of Translational regulator CsrA from Leptospira borgpetersenii serovar Hardjo-bovis (strain JB197).